Reading from the N-terminus, the 79-residue chain is Methionine-rich peptide X (79 aa).

Positions 1 to 22 (MKKLAAVMLTSCLMVAVGASFA) are cleaved as a signal peptide. Residues 37–79 (KKDDMAKDEMKKDSMAKDGMKKDAMKKDAMMKKDGMTKDEMKK) form a disordered region.

In terms of processing, protein is oxidized (possibly on Met residues) when cells are exposed to chlorite or hypochlorite; initially the protein is highly oxidized, by 50 minutes all protein is in the reduced form.

It is found in the periplasm. In terms of biological role, serves as an oxidative stress sink, specifically for chlorite and hypochlorite. The sequence is that of Methionine-rich peptide X from Azospira oryzae (strain ATCC BAA-33 / DSM 13638 / PS) (Dechlorosoma suillum).